A 301-amino-acid chain; its full sequence is Ubiquitin thioesterase OTU1 (301 aa).

The interval 4 to 80 is UBX-like; it reads KVTGAGINQV…TIESSDSNES (77 aa). The region spanning 109-229 is the OTU domain; sequence LSVHPVLDDN…GIHYDSLTMN (121 aa). The cys-loop stretch occupies residues 114-120; the sequence is VLDDNSC. Residue Asp-117 is part of the active site. The Nucleophile role is filled by Cys-120. A Glycyl lysine isopeptide (Lys-Gly) (interchain with G-Cter in ubiquitin) cross-link involves residue Lys-160. A variable-loop region spans residues 169-179; that stretch reads ILKMESWGGAI. The his-loop stretch occupies residues 218 to 222; the sequence is FNGIH. Ile-221 contacts substrate. Residue His-222 is part of the active site. An S2 site region spans residues 243–248; it reads DDVLTA. The segment at 270–294 adopts a C2H2-type zinc-finger fold; that stretch reads IKCNTCQMTFVGEREVARHAESTGH. His-294 is an active-site residue.

As to quaternary structure, forms a complex composed of CDC48, NPL4, UFD1, DOA1, SHP1 and deubiquitinase OTU1; within the complex interacts with CDC48 and DOA1/UFD3.

Its subcellular location is the cytoplasm. The protein resides in the nucleus. It catalyses the reaction Thiol-dependent hydrolysis of ester, thioester, amide, peptide and isopeptide bonds formed by the C-terminal Gly of ubiquitin (a 76-residue protein attached to proteins as an intracellular targeting signal).. In terms of biological role, hydrolase that can remove conjugated ubiquitin from proteins and may therefore play an important regulatory role at the level of protein turnover by preventing degradation. Participates in the regulation of the ubiquitin conjugation pathway involving CDC48 by hindering multiubiquitination of substrates at the CDC48 chaperone. May be indirectly involved in PIS1 gene expression. In Saccharomyces cerevisiae (strain ATCC 204508 / S288c) (Baker's yeast), this protein is Ubiquitin thioesterase OTU1 (OTU1).